Consider the following 418-residue polypeptide: UDP-N-acetylglucosamine 1-carboxyvinyltransferase (418 aa).

Phosphoenolpyruvate is bound at residue 22-23 (KN). Residue Arg91 coordinates UDP-N-acetyl-alpha-D-glucosamine. Cys115 acts as the Proton donor in catalysis. A 2-(S-cysteinyl)pyruvic acid O-phosphothioketal modification is found at Cys115. UDP-N-acetyl-alpha-D-glucosamine contacts are provided by residues 120–124 (RPVDL), 160–163 (KVSV), Asp305, and Ile327.

The protein belongs to the EPSP synthase family. MurA subfamily.

Its subcellular location is the cytoplasm. The enzyme catalyses phosphoenolpyruvate + UDP-N-acetyl-alpha-D-glucosamine = UDP-N-acetyl-3-O-(1-carboxyvinyl)-alpha-D-glucosamine + phosphate. It participates in cell wall biogenesis; peptidoglycan biosynthesis. Cell wall formation. Adds enolpyruvyl to UDP-N-acetylglucosamine. This is UDP-N-acetylglucosamine 1-carboxyvinyltransferase from Baumannia cicadellinicola subsp. Homalodisca coagulata.